Here is a 179-residue protein sequence, read N- to C-terminus: Large ribosomal subunit protein uL5 (179 aa).

Belongs to the universal ribosomal protein uL5 family. As to quaternary structure, part of the 50S ribosomal subunit; part of the 5S rRNA/L5/L18/L25 subcomplex. Contacts the 5S rRNA and the P site tRNA. Forms a bridge to the 30S subunit in the 70S ribosome.

Functionally, this is one of the proteins that bind and probably mediate the attachment of the 5S RNA into the large ribosomal subunit, where it forms part of the central protuberance. In the 70S ribosome it contacts protein S13 of the 30S subunit (bridge B1b), connecting the 2 subunits; this bridge is implicated in subunit movement. Contacts the P site tRNA; the 5S rRNA and some of its associated proteins might help stabilize positioning of ribosome-bound tRNAs. This is Large ribosomal subunit protein uL5 from Bacillus cereus (strain Q1).